The primary structure comprises 479 residues: ATP synthase subunit beta (479 aa).

168-175 contacts ATP; sequence GGAGVGKT.

The protein belongs to the ATPase alpha/beta chains family. As to quaternary structure, F-type ATPases have 2 components, CF(1) - the catalytic core - and CF(0) - the membrane proton channel. CF(1) has five subunits: alpha(3), beta(3), gamma(1), delta(1), epsilon(1). CF(0) has three main subunits: a(1), b(2) and c(9-12). The alpha and beta chains form an alternating ring which encloses part of the gamma chain. CF(1) is attached to CF(0) by a central stalk formed by the gamma and epsilon chains, while a peripheral stalk is formed by the delta and b chains.

It is found in the cell membrane. The catalysed reaction is ATP + H2O + 4 H(+)(in) = ADP + phosphate + 5 H(+)(out). Its function is as follows. Produces ATP from ADP in the presence of a proton gradient across the membrane. The catalytic sites are hosted primarily by the beta subunits. This Parafrankia sp. (strain EAN1pec) protein is ATP synthase subunit beta.